The sequence spans 110 residues: NADH-quinone oxidoreductase subunit K (110 aa).

3 consecutive transmembrane segments (helical) span residues 7–27, 31–51, and 73–93; these read LGSY…GVFV, IIAI…NFIA, and IFVI…VIAI.

This sequence belongs to the complex I subunit 4L family. In terms of assembly, NDH-1 is composed of 14 different subunits. Subunits NuoA, H, J, K, L, M, N constitute the membrane sector of the complex.

The protein localises to the cell membrane. The catalysed reaction is a quinone + NADH + 5 H(+)(in) = a quinol + NAD(+) + 4 H(+)(out). Functionally, NDH-1 shuttles electrons from NADH, via FMN and iron-sulfur (Fe-S) centers, to quinones in the respiratory chain. The immediate electron acceptor for the enzyme in this species is believed to be a menaquinone. Couples the redox reaction to proton translocation (for every two electrons transferred, four hydrogen ions are translocated across the cytoplasmic membrane), and thus conserves the redox energy in a proton gradient. The chain is NADH-quinone oxidoreductase subunit K from Desulfitobacterium hafniense (strain DSM 10664 / DCB-2).